An 808-amino-acid chain; its full sequence is Protein tortoise (808 aa).

Residues 43 to 78 adopt a coiled-coil conformation; that stretch reads KDRKELYSLNNDSIKKKLNQLKDETNQLLKERGEEL. The interval 152-171 is disordered; sequence LTSGGANKKKSPFLEDNNNK. Residues 694-733 are a coiled coil; the sequence is EDLDFQIEELELMIKNKKILEREIKAHNEKISKIIKDSRD.

Its subcellular location is the mitochondrion. Its function is as follows. Required for efficient chemotaxis. In Dictyostelium discoideum (Social amoeba), this protein is Protein tortoise (torA).